The sequence spans 208 residues: Large ribosomal subunit protein uL4 (208 aa).

The tract at residues Gln44–Asn79 is disordered.

This sequence belongs to the universal ribosomal protein uL4 family. As to quaternary structure, part of the 50S ribosomal subunit.

One of the primary rRNA binding proteins, this protein initially binds near the 5'-end of the 23S rRNA. It is important during the early stages of 50S assembly. It makes multiple contacts with different domains of the 23S rRNA in the assembled 50S subunit and ribosome. In terms of biological role, forms part of the polypeptide exit tunnel. This chain is Large ribosomal subunit protein uL4, found in Phocaeicola vulgatus (strain ATCC 8482 / DSM 1447 / JCM 5826 / CCUG 4940 / NBRC 14291 / NCTC 11154) (Bacteroides vulgatus).